Reading from the N-terminus, the 394-residue chain is Serine palmitoyltransferase (394 aa).

Pyridoxal 5'-phosphate contacts are provided by residues 111–112 (GF), serine 183, histidine 211, and threonine 239. Lysine 242 is modified (N6-(pyridoxal phosphate)lysine).

This sequence belongs to the class-II pyridoxal-phosphate-dependent aminotransferase family. It depends on pyridoxal 5'-phosphate as a cofactor.

It catalyses the reaction L-serine + hexadecanoyl-CoA + H(+) = 3-oxosphinganine + CO2 + CoA. It participates in lipid metabolism; sphingolipid metabolism. In terms of biological role, involved in de novo bacterial ceramide synthesis. Catalyzes the condensation of L-serine with palmitoyl-CoA (hexadecanoyl-CoA) to produce 3-oxosphinganine. Also capable of using alanine as substrate leading to the formation of 1-deoxysphinganine (1-deoxySa). Contributes to the levels of endogenous sphingolipids in its host. This Bacteroides thetaiotaomicron (strain ATCC 29148 / DSM 2079 / JCM 5827 / CCUG 10774 / NCTC 10582 / VPI-5482 / E50) protein is Serine palmitoyltransferase.